Reading from the N-terminus, the 509-residue chain is Kynureninase 1 (509 aa).

Residues Leu169, Thr170, 197-200 (FPSD), Asp283, His286, and Tyr308 contribute to the pyridoxal 5'-phosphate site. An N6-(pyridoxal phosphate)lysine modification is found at Lys309. The pyridoxal 5'-phosphate site is built by Trp349 and Asn377.

Belongs to the kynureninase family. As to quaternary structure, homodimer. Pyridoxal 5'-phosphate is required as a cofactor.

The protein localises to the cytoplasm. The enzyme catalyses L-kynurenine + H2O = anthranilate + L-alanine + H(+). It carries out the reaction 3-hydroxy-L-kynurenine + H2O = 3-hydroxyanthranilate + L-alanine + H(+). It participates in amino-acid degradation; L-kynurenine degradation; L-alanine and anthranilate from L-kynurenine: step 1/1. Its pathway is cofactor biosynthesis; NAD(+) biosynthesis; quinolinate from L-kynurenine: step 2/3. In terms of biological role, catalyzes the cleavage of L-kynurenine (L-Kyn) and L-3-hydroxykynurenine (L-3OHKyn) into anthranilic acid (AA) and 3-hydroxyanthranilic acid (3-OHAA), respectively. In Aspergillus fumigatus (strain CBS 144.89 / FGSC A1163 / CEA10) (Neosartorya fumigata), this protein is Kynureninase 1 (bna5-1).